Reading from the N-terminus, the 388-residue chain is Succinate--CoA ligase [ADP-forming] subunit beta (388 aa).

The ATP-grasp domain maps to 9–244; the sequence is KQLFAEFGLP…PSQEDEREAH (236 aa). Residues K46, 53–55, E99, S102, and E107 each bind ATP; that span reads GRG. Positions 199 and 213 each coordinate Mg(2+). Substrate is bound by residues N264 and 321 to 323; that span reads GIV.

This sequence belongs to the succinate/malate CoA ligase beta subunit family. In terms of assembly, heterotetramer of two alpha and two beta subunits. Requires Mg(2+) as cofactor.

It carries out the reaction succinate + ATP + CoA = succinyl-CoA + ADP + phosphate. The enzyme catalyses GTP + succinate + CoA = succinyl-CoA + GDP + phosphate. It participates in carbohydrate metabolism; tricarboxylic acid cycle; succinate from succinyl-CoA (ligase route): step 1/1. Functionally, succinyl-CoA synthetase functions in the citric acid cycle (TCA), coupling the hydrolysis of succinyl-CoA to the synthesis of either ATP or GTP and thus represents the only step of substrate-level phosphorylation in the TCA. The beta subunit provides nucleotide specificity of the enzyme and binds the substrate succinate, while the binding sites for coenzyme A and phosphate are found in the alpha subunit. The protein is Succinate--CoA ligase [ADP-forming] subunit beta of Vibrio parahaemolyticus serotype O3:K6 (strain RIMD 2210633).